Reading from the N-terminus, the 1387-residue chain is Collagen-like protein 6 (1387 aa).

N-linked (GlcNAc...) asparagine; by host glycosylation is present at Asn6. Collagen-like domains follow at residues Gly95–Ile154, Gly161–Asn220, Gly266–Met325, Gly344–Lys403, Ile450–Ile508, and Gly512–Ser751. Disordered stretches follow at residues Gly98–Asp219, Lys268–Gly422, and Lys454–Gln753. 8 stretches are compositionally biased toward basic and acidic residues: residues Ile114–Lys181, Ser189–Lys199, Ser207–Asp219, Lys268–Lys340, Lys364–Asn382, Ser390–Glu405, Lys454–Ile535, and Lys544–Glu747. 15 N-linked (GlcNAc...) asparagine; by host glycosylation sites follow: Asn794, Asn814, Asn819, Asn826, Asn846, Asn886, Asn894, Asn969, Asn1032, Asn1077, Asn1123, Asn1200, Asn1224, Asn1232, and Asn1233.

May be hydroxylated on lysine by the viral-encoded procollagen-lysine,2-oxoglutarate 5-dioxygenase.

Its subcellular location is the virion. Its function is as follows. May participate in the formation of a layer of cross-linked glycosylated fibrils at the viral surface thus giving it a hairy-like appearance. This is Collagen-like protein 6 from Acanthamoeba polyphaga mimivirus (APMV).